The chain runs to 68 residues: Beta-defensin 1 (68 aa).

The first 21 residues, 1-21 (MRTSYLLLFTLCLLLSEMASG), serve as a signal peptide directing secretion. Residues 22–32 (GNFLTGLGHRS) constitute a propeptide that is removed on maturation. Cystine bridges form between cysteine 37–cysteine 66, cysteine 44–cysteine 59, and cysteine 49–cysteine 67.

The protein belongs to the beta-defensin family. In terms of assembly, monomer. Homodimer.

Its subcellular location is the secreted. The protein resides in the membrane. In terms of biological role, has bactericidal activity. May act as a ligand for C-C chemokine receptor CCR6. Positively regulates the sperm motility and bactericidal activity in a CCR6-dependent manner. Binds to CCR6 and triggers Ca2+ mobilization in the sperm which is important for its motility. This chain is Beta-defensin 1 (DEFB1), found in Pongo pygmaeus (Bornean orangutan).